Consider the following 488-residue polypeptide: Wax ester synthase/diacylglycerol acyltransferase 8 (488 aa).

Over Met1–Arg195 the chain is Cytoplasmic. His135 functions as the Proton acceptor in the catalytic mechanism. Residues Leu196–Leu214 traverse the membrane as a helical segment. The Lumenal portion of the chain corresponds to Lys215 to Val488. 4 N-linked (GlcNAc...) asparagine glycosylation sites follow: Asn238, Asn252, Asn353, and Asn397.

It in the N-terminal section; belongs to the long-chain O-acyltransferase family. As to expression, mostly expressed in flowers and siliques and at low levels in stems.

It is found in the cell membrane. The protein localises to the endoplasmic reticulum membrane. The enzyme catalyses an acyl-CoA + a 1,2-diacyl-sn-glycerol = a triacyl-sn-glycerol + CoA. It carries out the reaction a long chain fatty alcohol + a fatty acyl-CoA = a wax ester + CoA. It functions in the pathway glycerolipid metabolism; triacylglycerol biosynthesis. Its pathway is lipid metabolism. Functionally, bifunctional wax ester synthase/diacylglycerol acyltransferase. Involved in cuticular wax biosynthesis. The chain is Wax ester synthase/diacylglycerol acyltransferase 8 from Arabidopsis thaliana (Mouse-ear cress).